We begin with the raw amino-acid sequence, 218 residues long: GILT-like protein ZK669.3 (218 aa).

An N-terminal signal peptide occupies residues 1–21 (MRRLNGVFICLILFITKISYA). N-linked (GlcNAc...) asparagine glycans are attached at residues Asn129 and Asn185.

This sequence belongs to the GILT family.

It is found in the secreted. In Caenorhabditis elegans, this protein is GILT-like protein ZK669.3.